The primary structure comprises 406 residues: Aminomethyltransferase, mitochondrial (406 aa).

Residues 1–29 (MRGGLWQLGQSITRRLAQADKKTIGRRCF) constitute a mitochondrion transit peptide. Glu234, Arg265, and Tyr403 together coordinate substrate.

This sequence belongs to the GcvT family. The glycine cleavage system is composed of four proteins: P, T, L and H.

The protein resides in the mitochondrion. The catalysed reaction is N(6)-[(R)-S(8)-aminomethyldihydrolipoyl]-L-lysyl-[protein] + (6S)-5,6,7,8-tetrahydrofolate = N(6)-[(R)-dihydrolipoyl]-L-lysyl-[protein] + (6R)-5,10-methylene-5,6,7,8-tetrahydrofolate + NH4(+). Its function is as follows. The glycine cleavage system catalyzes the degradation of glycine. The chain is Aminomethyltransferase, mitochondrial (GDCST) from Solanum tuberosum (Potato).